A 408-amino-acid chain; its full sequence is Argininosuccinate synthase (408 aa).

14–22 (AYSGGLDTS) serves as a coordination point for ATP. Residues Y92 and S97 each contribute to the L-citrulline site. ATP is bound at residue G122. Residues T124, N128, and D129 each contribute to the L-aspartate site. An L-citrulline-binding site is contributed by N128. L-citrulline contacts are provided by R132, S181, S190, E266, and Y278.

This sequence belongs to the argininosuccinate synthase family. Type 1 subfamily. As to quaternary structure, homotetramer.

Its subcellular location is the cytoplasm. The enzyme catalyses L-citrulline + L-aspartate + ATP = 2-(N(omega)-L-arginino)succinate + AMP + diphosphate + H(+). The protein operates within amino-acid biosynthesis; L-arginine biosynthesis; L-arginine from L-ornithine and carbamoyl phosphate: step 2/3. This is Argininosuccinate synthase from Moorella thermoacetica (strain ATCC 39073 / JCM 9320).